Consider the following 130-residue polypeptide: Small ribosomal subunit protein uS9 (130 aa).

It belongs to the universal ribosomal protein uS9 family.

This Cupriavidus necator (strain ATCC 17699 / DSM 428 / KCTC 22496 / NCIMB 10442 / H16 / Stanier 337) (Ralstonia eutropha) protein is Small ribosomal subunit protein uS9.